An 848-amino-acid chain; its full sequence is Crooked neck-like protein 1 (848 aa).

T2 bears the N-acetylalanine mark. The tract at residues 81–106 (RSSRTPHSTRCRKEDAQPGHHGNGAA) is disordered. 17 HAT repeats span residues 222-254 (DYKLRKRKTFEDNIRKNRTVISNWIKYAQWEES), 256-288 (KEIQRARSIYERALDVDYRNITLWLKYAEMEMK), 290-322 (RQVNHARNIWDRAITTLPRVNQFWYKYTYMEEM), 324-355 (GNVAGARQVFERWMEWQPEEQAWHSYINFELR), 357-388 (KEVDRARTIYERFVLVHPDVKNWIKYARFEEK), 390-425 (AYFAHARKVYERAVEFFGDEHMDEHLYVAFAKFEEN), 427-461 (KEFERVRVIYKYALDRISKQDAQELFKNYTIFEKK), 471-503 (IIVSKRRFQYEEEVKANPHNYDAWFDYLRLVES), 505-539 (AEAEAVREVYERAIANVPPIQEKRHWKRYIYLWIN), 549-585 (KDPERTRQVYQASLELIPHKKFTFAKMWILYAQFEIR), 587-618 (KNLSLARRALGTSIGKCPKNKLFKVYIELELQ), 620-652 (REFDRCRKLYEKFLEFGPENCTSWIKFAELETI), 654-688 (GDIDRARAIYELAISQPRLDMPEVLWKSYIDFEIE), 690-721 (EETERTRNLYRRLLQRTQHVKVWISFAQFELS), 726-767 (GSLT…EFGT), 769-807 (SDKERVDKLMPEKVKKRRKVQTDDGSDAGWEEYFDYIFP), and 809-834 (DAANQPNLKLLAMAKLWKKQQQEKED). Positions 411–628 (MDEHLYVAFA…LREFDRCRKL (218 aa)) are mediates interaction with HSP90. S503 carries the post-translational modification Phosphoserine. Residues 827 to 848 (KQQQEKEDAEHHPDEDVDESES) are disordered. Basic and acidic residues predominate over residues 828-840 (QQQEKEDAEHHPD).

This sequence belongs to the crooked-neck family. Identified in the spliceosome C complex. Present in a spliceosome complex assembled in vitro containing CRNKL1, HPRP8BP and SNRPB2. Component of the minor spliceosome, which splices U12-type introns. Isoform 2 seems to be predominant in the spliceosome complex. Interacts with PPIL2 (via the PPIase cyclophilin-type domain); they may form a trimeric complex with HSP90. Widely expressed. Highly expressed in testis. Not detected in brain and lung.

It is found in the nucleus. It localises to the nucleus speckle. Its function is as follows. Involved in pre-mRNA splicing process. As a component of the minor spliceosome, involved in the splicing of U12-type introns in pre-mRNAs. The polypeptide is Crooked neck-like protein 1 (CRNKL1) (Homo sapiens (Human)).